Consider the following 462-residue polypeptide: Chromosomal replication initiator protein DnaA (462 aa).

A domain I, interacts with DnaA modulators region spans residues 1–84 (MAVSLWQQCI…RFDIGSRPSA (84 aa)). Positions 84–125 (APKPIQATAAVVKPKLESSPQKSQTSFNVNAPEPAATANHRS) are domain II. The segment at 126-342 (NINPTYQFEN…GALNRVIANA (217 aa)) is domain III, AAA+ region. ATP contacts are provided by Gly170, Gly172, Lys173, and Thr174. The segment at 343–462 (NFTGRPITID…YANLIRTLSS (120 aa)) is domain IV, binds dsDNA.

This sequence belongs to the DnaA family. In terms of assembly, oligomerizes as a right-handed, spiral filament on DNA at oriC.

It is found in the cytoplasm. Its function is as follows. Plays an essential role in the initiation and regulation of chromosomal replication. ATP-DnaA binds to the origin of replication (oriC) to initiate formation of the DNA replication initiation complex once per cell cycle. Binds the DnaA box (a 9 base pair repeat at the origin) and separates the double-stranded (ds)DNA. Forms a right-handed helical filament on oriC DNA; dsDNA binds to the exterior of the filament while single-stranded (ss)DNA is stabiized in the filament's interior. The ATP-DnaA-oriC complex binds and stabilizes one strand of the AT-rich DNA unwinding element (DUE), permitting loading of DNA polymerase. After initiation quickly degrades to an ADP-DnaA complex that is not apt for DNA replication. Binds acidic phospholipids. The protein is Chromosomal replication initiator protein DnaA of Shewanella woodyi (strain ATCC 51908 / MS32).